The following is a 327-amino-acid chain: Pyruvate dehydrogenase E1 component subunit beta (327 aa).

Glu-60 contributes to the thiamine diphosphate binding site. K(+)-binding residues include Val-113, Ala-161, Ile-162, and Glu-164.

In terms of assembly, heterodimer of an alpha and a beta chain. The cofactor is thiamine diphosphate.

It is found in the plastid. The protein localises to the chloroplast. It carries out the reaction N(6)-[(R)-lipoyl]-L-lysyl-[protein] + pyruvate + H(+) = N(6)-[(R)-S(8)-acetyldihydrolipoyl]-L-lysyl-[protein] + CO2. Functionally, the pyruvate dehydrogenase complex catalyzes the overall conversion of pyruvate to acetyl-CoA and CO(2). It contains multiple copies of three enzymatic components: pyruvate dehydrogenase (E1), dihydrolipoamide acetyltransferase (E2) and lipoamide dehydrogenase (E3). The polypeptide is Pyruvate dehydrogenase E1 component subunit beta (pdhB) (Cyanidium caldarium (Red alga)).